The chain runs to 353 residues: Ubiquinol oxidase 2, mitochondrial (353 aa).

The N-terminal 21 residues, 1–21 (MSQLITKAALRVLLVCGRGNC), are a transit peptide targeting the mitochondrion. Residues 178–198 (AMMLETVAAVPGMVGGMLLHL) form a helical membrane-spanning segment. Positions 182, 221, and 224 each coordinate Fe cation. A helical membrane pass occupies residues 240–260 (LLVMLVQGIFFNSFFVCYVIS). Residues Glu272, Glu323, and His326 each contribute to the Fe cation site.

It belongs to the alternative oxidase family. Homodimer; disulfide-linked. The cofactor is Fe cation. In terms of tissue distribution, maximally expressed in dry seeds. Detected in roots, stems and leaves.

Its subcellular location is the mitochondrion inner membrane. It carries out the reaction 2 a ubiquinol + O2 = 2 a ubiquinone + 2 H2O. Its function is as follows. Catalyzes the cyanide-resistant oxidation of ubiquinol and the reduction of molecular oxygen to water, but does not translocate protons and consequently is not linked to oxidative phosphorylation. May increase respiration when the cytochrome respiratory pathway is restricted, or in response to low temperatures. In Arabidopsis thaliana (Mouse-ear cress), this protein is Ubiquinol oxidase 2, mitochondrial (AOX2).